A 567-amino-acid chain; its full sequence is Proline--tRNA ligase (567 aa).

Belongs to the class-II aminoacyl-tRNA synthetase family. ProS type 1 subfamily. Homodimer.

Its subcellular location is the cytoplasm. The catalysed reaction is tRNA(Pro) + L-proline + ATP = L-prolyl-tRNA(Pro) + AMP + diphosphate. Its function is as follows. Catalyzes the attachment of proline to tRNA(Pro) in a two-step reaction: proline is first activated by ATP to form Pro-AMP and then transferred to the acceptor end of tRNA(Pro). As ProRS can inadvertently accommodate and process non-cognate amino acids such as alanine and cysteine, to avoid such errors it has two additional distinct editing activities against alanine. One activity is designated as 'pretransfer' editing and involves the tRNA(Pro)-independent hydrolysis of activated Ala-AMP. The other activity is designated 'posttransfer' editing and involves deacylation of mischarged Ala-tRNA(Pro). The misacylated Cys-tRNA(Pro) is not edited by ProRS. This chain is Proline--tRNA ligase, found in Stenotrophomonas maltophilia (strain K279a).